Here is a 422-residue protein sequence, read N- to C-terminus: Metallocarboxypeptidase A (422 aa).

The first 17 residues, 1-17 (MRSVLSLALLAANVVTA), serve as a signal peptide directing secretion. The propeptide at 18–112 (AVVSPFDYSG…FEAYSAGYAP (95 aa)) is activation peptide. A Peptidase M14 domain is found at 119–419 (SYHSYQDHLS…AGTVAMLKAV (301 aa)). Histidine 179 and glutamate 182 together coordinate Zn(2+). Residues 179–182 (HARE), arginine 237, and 254–255 (NR) each bind substrate. Cysteine 248 and cysteine 271 are joined by a disulfide. Histidine 309 is a binding site for Zn(2+). 310–311 (SY) serves as a coordination point for substrate. Glutamate 385 acts as the Proton donor/acceptor in catalysis.

It belongs to the peptidase M14 family. Requires Zn(2+) as cofactor.

The protein resides in the secreted. Functionally, extracellular metalloprotease that contributes to pathogenicity. The sequence is that of Metallocarboxypeptidase A (MCPA) from Trichophyton rubrum (Athlete's foot fungus).